A 316-amino-acid chain; its full sequence is Lipooligosaccharide heptosyltransferase 2 (316 aa).

Belongs to the glycosyltransferase 9 family.

The enzyme catalyses an L-alpha-D-Hep-(1-&gt;5)-[alpha-Kdo-(2-&gt;4)]-alpha-Kdo-(2-&gt;6)-lipid A + ADP-L-glycero-beta-D-manno-heptose = an L-alpha-D-Hep-(1-&gt;3)-L-alpha-D-Hep-(1-&gt;5)-[alpha-Kdo-(2-&gt;4)]-alpha-Kdo-(2-&gt;6)-lipid A + ADP + H(+). The protein operates within bacterial outer membrane biogenesis; LOS core biosynthesis. Its function is as follows. Glycosyltransferase involved in the biosynthesis of the core oligosaccharide region of lipooligosaccharide (LOS). Catalyzes the addition of the second heptose unit to the heptosyl-Kdo2-lipid A module. This is Lipooligosaccharide heptosyltransferase 2 from Campylobacter jejuni subsp. jejuni serotype O:6 (strain 81116 / NCTC 11828).